We begin with the raw amino-acid sequence, 351 residues long: D-alanine--D-alanine ligase (351 aa).

One can recognise an ATP-grasp domain in the interval 135–344; it reads KMAFAQAGLP…FAELVDQLIQ (210 aa). 171 to 226 is an ATP binding site; the sequence is EQRLGYPCFVKPANLGSSVGIAKVRSRSELEKALDSAASYDRRIVIETGVKAREVE. Residues Asp-297, Glu-311, and Asn-313 each coordinate Mg(2+).

Belongs to the D-alanine--D-alanine ligase family. Mg(2+) serves as cofactor. The cofactor is Mn(2+).

It is found in the cytoplasm. The enzyme catalyses 2 D-alanine + ATP = D-alanyl-D-alanine + ADP + phosphate + H(+). It participates in cell wall biogenesis; peptidoglycan biosynthesis. In terms of biological role, cell wall formation. This chain is D-alanine--D-alanine ligase, found in Rippkaea orientalis (strain PCC 8801 / RF-1) (Cyanothece sp. (strain PCC 8801)).